Reading from the N-terminus, the 90-residue chain is Barrier-to-autointegration factor-like protein (90 aa).

As to quaternary structure, homodimer. Heterodimerizes with BANF1.

The protein localises to the nucleus. Its subcellular location is the cytoplasm. May play a role in BANF1 regulation and influence tissue-specific roles of BANF1. In Mus musculus (Mouse), this protein is Barrier-to-autointegration factor-like protein (Banf2).